The chain runs to 220 residues: Iron-sulfur cluster repair protein YtfE (220 aa).

Belongs to the RIC family. YtfE subfamily. In terms of assembly, homodimer.

It localises to the cytoplasm. Di-iron-containing protein involved in the repair of iron-sulfur clusters damaged by oxidative and nitrosative stress conditions. This is Iron-sulfur cluster repair protein YtfE from Salmonella paratyphi A (strain AKU_12601).